Consider the following 258-residue polypeptide: Acyl-[acyl-carrier-protein]--UDP-N-acetylglucosamine O-acyltransferase (258 aa).

It belongs to the transferase hexapeptide repeat family. LpxA subfamily. Homotrimer.

It localises to the cytoplasm. The catalysed reaction is a (3R)-hydroxyacyl-[ACP] + UDP-N-acetyl-alpha-D-glucosamine = a UDP-3-O-[(3R)-3-hydroxyacyl]-N-acetyl-alpha-D-glucosamine + holo-[ACP]. The protein operates within glycolipid biosynthesis; lipid IV(A) biosynthesis; lipid IV(A) from (3R)-3-hydroxytetradecanoyl-[acyl-carrier-protein] and UDP-N-acetyl-alpha-D-glucosamine: step 1/6. Its function is as follows. Involved in the biosynthesis of lipid A, a phosphorylated glycolipid that anchors the lipopolysaccharide to the outer membrane of the cell. The chain is Acyl-[acyl-carrier-protein]--UDP-N-acetylglucosamine O-acyltransferase from Pseudomonas savastanoi pv. phaseolicola (strain 1448A / Race 6) (Pseudomonas syringae pv. phaseolicola (strain 1448A / Race 6)).